Here is a 240-residue protein sequence, read N- to C-terminus: 4-hydroxy-tetrahydrodipicolinate reductase (240 aa).

Residues 79-81 (ATT) and 103-106 (SANM) contribute to the NAD(+) site. Residue H135 is the Proton donor/acceptor of the active site. H136 contacts (S)-2,3,4,5-tetrahydrodipicolinate. Residue K139 is the Proton donor of the active site. 145-146 (GT) contributes to the (S)-2,3,4,5-tetrahydrodipicolinate binding site.

It belongs to the DapB family.

The protein localises to the cytoplasm. It catalyses the reaction (S)-2,3,4,5-tetrahydrodipicolinate + NAD(+) + H2O = (2S,4S)-4-hydroxy-2,3,4,5-tetrahydrodipicolinate + NADH + H(+). The enzyme catalyses (S)-2,3,4,5-tetrahydrodipicolinate + NADP(+) + H2O = (2S,4S)-4-hydroxy-2,3,4,5-tetrahydrodipicolinate + NADPH + H(+). It participates in amino-acid biosynthesis; L-lysine biosynthesis via DAP pathway; (S)-tetrahydrodipicolinate from L-aspartate: step 4/4. Functionally, catalyzes the conversion of 4-hydroxy-tetrahydrodipicolinate (HTPA) to tetrahydrodipicolinate. The chain is 4-hydroxy-tetrahydrodipicolinate reductase from Staphylococcus aureus (strain USA300).